Consider the following 1365-residue polypeptide: Serine/threonine-protein kinase LMTK1 (1365 aa).

A helical membrane pass occupies residues 32 to 52 (LAVVAVSFSGIFTVVILMLAC). A Protein kinase domain is found at 126–396 (LLYLKEIGHG…PTAEEVHLLL (271 aa)). ATP-binding positions include 132–140 (IGHGWFGKV) and Lys157. Asp254 acts as the Proton acceptor in catalysis. Ser500 carries the post-translational modification Phosphoserine. 5 disordered regions span residues 550–623 (PDCA…LPAE), 638–698 (DDPL…GYVS), 791–1186 (QEAE…PAVP), 1237–1293 (ESPT…EWDG), and 1343–1365 (ISDS…YTEA). Over residues 560–575 (QAVTDQDNNSEESTVA) the composition is skewed to polar residues. 2 stretches are compositionally biased toward low complexity: residues 638 to 655 (DDPL…QPSP) and 675 to 686 (SSNMSANNNSAS). Polar residues-rich tracts occupy residues 848 to 860 (LESS…QEAP) and 869 to 879 (EATSGVFTDLS). Composition is skewed to low complexity over residues 904-918 (PDSL…SASD) and 981-993 (PLLS…LSKK). Residues 1015–1030 (PEKHSGIQDSQKEQDL) are compositionally biased toward basic and acidic residues. At Ser1035 the chain carries Phosphoserine. Residues 1037–1053 (GHQSVQAFPRSAVSSEV) are compositionally biased toward polar residues. Positions 1072-1083 (PLGAQGPVGVQP) are enriched in low complexity. The segment covering 1104–1132 (GSGTEPQGPSGQLSGRAQQGQMGNPSTPR) has biased composition (polar residues). A compositionally biased stretch (acidic residues) spans 1150–1164 (PEEDEDTEDSEESDE). The residue at position 1156 (Thr1156) is a Phosphothreonine. Ser1159, Ser1162, Ser1175, Ser1178, and Ser1253 each carry phosphoserine. Residues 1354 to 1365 (PAAGAGGRYTEA) show a composition bias toward gly residues.

This sequence belongs to the protein kinase superfamily. Tyr protein kinase family. As to quaternary structure, interacts with CDK5. Post-translationally, autophosphorylated. Phosphorylated by CDK5. As to expression, expressed in brain, and, to a lower extent, in kidney, heart, lung and skeletal muscle. In the brain, expressed in the olfactory bulb, cerebellum, striatum, hippocampal formation, thalamus, hypothalamus, and pontine nuclei (at protein level).

It is found in the membrane. Its subcellular location is the cytoplasm. The protein localises to the perinuclear region. The protein resides in the cell projection. It localises to the dendrite. It is found in the axon. Its subcellular location is the growth cone. It carries out the reaction L-seryl-[protein] + ATP = O-phospho-L-seryl-[protein] + ADP + H(+). The catalysed reaction is L-threonyl-[protein] + ATP = O-phospho-L-threonyl-[protein] + ADP + H(+). May be involved in neuronal differentiation. In Mus musculus (Mouse), this protein is Serine/threonine-protein kinase LMTK1 (Aatk).